The chain runs to 1385 residues: Formin-like protein 7 (1385 aa).

The Phosphatase tensin-type domain occupies 9–193; that stretch reads FKKPPDGLLL…RYVSMRNVVP (185 aa). The active-site Phosphocysteine intermediate is Cys-126. The 160-residue stretch at 199 to 358 folds into the C2 tensin-type domain; it reads DRALTLDSVI…KASSTSQGNI (160 aa). Disordered stretches follow at residues 345–367, 427–510, 649–989, and 1362–1385; these read IPQRKASSTSQGNIDESPADGSE, APSR…LTVN, STAA…PLHW, and KRAQMEAEKEKVKAAAHKEDLLEP. Polar residues-rich tracts occupy residues 349-358, 448-470, and 483-510; these read KASSTSQGNI, TSASSMALPSSTVIPQAPSSPVQ, and PAQSASKSAENSGSQTPVNQEPSPLTVN. Composition is skewed to pro residues over residues 654–665 and 689–701; these read PPLPPPLPPPLK and TQPPLPPPPPPIQ. Over residues 702–718 the composition is skewed to low complexity; it reads PTLISNSIYSSTSSVVS. Pro residues-rich tracts occupy residues 727–758, 766–795, and 802–815; these read PAPPPPPPPPPPPPFPVSSFSPPQPPPQPPSA, PVPPPPPPPPPPMIPGMKTPPTPPPPPPAA, and AVPPPPPPPPPPMV. The span at 855–867 shows a compositional bias: low complexity; that stretch reads QTSSLVSSLPSSR. Pro residues-rich tracts occupy residues 895–906 and 921–932; these read SAPPAPPLPPPK and WPPPPPPGPPPK. Residues 933 to 942 are compositionally biased toward low complexity; that stretch reads NSSNSLPSKG. The region spanning 974–1372 is the FH2 domain; it reads RPNQSSKRTP…RAQMEAEKEK (399 aa).

It belongs to the formin-like family. Class-II subfamily.

In Oryza sativa subsp. japonica (Rice), this protein is Formin-like protein 7 (FH7).